We begin with the raw amino-acid sequence, 816 residues long: Acyl-homoserine lactone acylase QuiP (816 aa).

Residues 1–33 (MASPALSHFLPRFGVAAAVAGVLSLTGCQTWNA) form the signal peptide. Catalysis depends on Ser262, which acts as the Nucleophile.

Belongs to the peptidase S45 family. As to quaternary structure, heterodimer of an alpha subunit and a beta subunit processed from the same precursor.

The protein resides in the periplasm. It catalyses the reaction an N-acyl-L-homoserine lactone + H2O = L-homoserine lactone + a carboxylate. Its function is as follows. Catalyzes the deacylation of acyl-homoserine lactone (AHL or acyl-HSL), releasing homoserine lactone (HSL) and the corresponding fatty acid. Possesses a specificity for the degradation of long-chain acyl-HSLs (side chains of seven or more carbons in length). In Pseudomonas fluorescens (strain Pf0-1), this protein is Acyl-homoserine lactone acylase QuiP (quiP).